Consider the following 44-residue polypeptide: Conotoxin S5.1 (44 aa).

Contains 3 disulfide bonds. In terms of tissue distribution, expressed by the venom duct.

Its subcellular location is the secreted. In Conus striatus (Striated cone), this protein is Conotoxin S5.1.